The primary structure comprises 614 residues: BPI fold-containing family B member 4 (614 aa).

The first 18 residues, 1 to 18, serve as a signal peptide directing secretion; it reads MWMAWCVAALSVVAVCGT. N-linked (GlcNAc...) asparagine glycosylation occurs at Asn-273. Cys-295 and Cys-332 are disulfide-bonded.

This sequence belongs to the BPI/LBP/Plunc superfamily. BPI/LBP family. In terms of tissue distribution, expressed in nasal tissue.

It localises to the secreted. The protein localises to the cytoplasm. In terms of biological role, may have the capacity to recognize and bind specific classes of odorants. May act as a carrier molecule, transporting odorants across the mucus layer to access receptor sites. May serve as a primary defense mechanism by recognizing and removing potentially harmful odorants or pathogenic microorganisms from the mucosa or clearing excess odorant from mucus to enable new odorant stimuli to be received. The protein is BPI fold-containing family B member 4 (BPIFB4) of Homo sapiens (Human).